The following is a 762-amino-acid chain: Putative cation exchanger YDL206W (762 aa).

Positions Met1–Ser26 are cleaved as a signal peptide. The Extracellular portion of the chain corresponds to Ser27–Ser30. Asn28 is a glycosylation site (N-linked (GlcNAc...) asparagine). Residues Ile31 to Val51 traverse the membrane as a helical segment. The Cytoplasmic portion of the chain corresponds to Thr52–Ser102. A helical transmembrane segment spans residues Leu103–Met123. Over Gly124–Tyr156 the chain is Extracellular. Asn148 carries an N-linked (GlcNAc...) asparagine glycan. Residues Ile157–Gly177 form a helical membrane-spanning segment. A topological domain (cytoplasmic) is located at residue Arg178. A helical membrane pass occupies residues Leu179–Ile199. Over Lys200 to Glu501 the chain is Extracellular. N-linked (GlcNAc...) asparagine glycosylation is found at Asn280 and Asn329. A helical membrane pass occupies residues Ile502–Leu522. At Ser523–Gln554 the chain is on the cytoplasmic side. Residues Leu555–Leu575 traverse the membrane as a helical segment. The Extracellular portion of the chain corresponds to Tyr576 to Asp589. A helical transmembrane segment spans residues Ile590–Ile610. Over Val611 to Thr615 the chain is Cytoplasmic. The helical transmembrane segment at His616–Gly636 threads the bilayer. The Extracellular segment spans residues Asn637–Lys650. Asn645 carries an N-linked (GlcNAc...) asparagine glycan. A helical transmembrane segment spans residues Ile651 to Phe671. At Gly672–Asn709 the chain is on the cytoplasmic side. Residues Leu710 to Leu730 form a helical membrane-spanning segment. Residues Asn731–Lys738 are Extracellular-facing. The chain crosses the membrane as a helical span at residues Ile739 to Val759. Topologically, residues His760–Val762 are cytoplasmic.

Belongs to the Ca(2+):cation antiporter (CaCA) (TC 2.A.19) family.

It localises to the membrane. Functionally, putative cation exchanger. The protein is Putative cation exchanger YDL206W of Saccharomyces cerevisiae (strain ATCC 204508 / S288c) (Baker's yeast).